Reading from the N-terminus, the 413-residue chain is Probable short/branched chain specific acyl-CoA dehydrogenase (413 aa).

FAD is bound by residues 152–161 (FCLSESGSGS) and 186–188 (WIT). Ser-161 provides a ligand contact to substrate. Substrate contacts are provided by residues Tyr-208, Tyr-262, and 270–273 (NEGR). FAD is bound by residues Arg-298, Gln-309, and 366 to 370 (SMLGG). Residue Glu-393 is the Proton acceptor of the active site. Residue 395-397 (TSN) participates in FAD binding.

The protein belongs to the acyl-CoA dehydrogenase family. In terms of assembly, homotetramer. The cofactor is FAD.

It catalyses the reaction 2-methylbutanoyl-CoA + oxidized [electron-transfer flavoprotein] + H(+) = (2E)-2-methylbut-2-enoyl-CoA + reduced [electron-transfer flavoprotein]. The protein operates within lipid metabolism; mitochondrial fatty acid beta-oxidation. Its pathway is amino-acid degradation; L-isoleucine degradation. Probable short and branched chain specific acyl-CoA dehydrogenase that catalyzes the removal of one hydrogen from C-2 and C-3 of the fatty acyl-CoA thioester, resulting in the formation of trans-2-enoyl-CoA. This is Probable short/branched chain specific acyl-CoA dehydrogenase (acadsb) from Dictyostelium discoideum (Social amoeba).